The primary structure comprises 186 residues: Elongation factor P (186 aa).

This sequence belongs to the elongation factor P family.

Its subcellular location is the cytoplasm. Its pathway is protein biosynthesis; polypeptide chain elongation. Involved in peptide bond synthesis. Stimulates efficient translation and peptide-bond synthesis on native or reconstituted 70S ribosomes in vitro. Probably functions indirectly by altering the affinity of the ribosome for aminoacyl-tRNA, thus increasing their reactivity as acceptors for peptidyl transferase. This chain is Elongation factor P, found in Streptococcus agalactiae serotype Ia (strain ATCC 27591 / A909 / CDC SS700).